Here is a 303-residue protein sequence, read N- to C-terminus: Ribosomal protein uL3 glutamine methyltransferase (303 aa).

The protein belongs to the protein N5-glutamine methyltransferase family. PrmB subfamily.

The enzyme catalyses L-glutaminyl-[ribosomal protein uL3] + S-adenosyl-L-methionine = N(5)-methyl-L-glutaminyl-[ribosomal protein uL3] + S-adenosyl-L-homocysteine + H(+). Its function is as follows. Methylates large ribosomal subunit protein uL3 on a specific glutamine residue. This is Ribosomal protein uL3 glutamine methyltransferase from Neisseria meningitidis serogroup B (strain ATCC BAA-335 / MC58).